A 402-amino-acid chain; its full sequence is Protein prenyltransferase alpha subunit repeat-containing protein 1 (402 aa).

The residue at position 2 (A2) is an N-acetylalanine. PFTA repeat units lie at residues 87-120 (LIDV…LNPI), 122-155 (DLHL…QETS), 180-213 (EMEV…KLDV), and 219-252 (ELSS…SQTV). The disordered stretch occupies residues 263-282 (LRSEPALVPPKDEEAAVSTE). A PFTA 5 repeat occupies 295 to 328 (EVEFSTDLIDSYPGHETLWCHRRHIFYLQHHLNA).

The protein belongs to the protein prenyltransferase subunit alpha family.

The protein is Protein prenyltransferase alpha subunit repeat-containing protein 1 (PTAR1) of Homo sapiens (Human).